Reading from the N-terminus, the 147-residue chain is UPF0260 protein CJA_2436 (147 aa).

It belongs to the UPF0260 family.

The chain is UPF0260 protein CJA_2436 from Cellvibrio japonicus (strain Ueda107) (Pseudomonas fluorescens subsp. cellulosa).